Reading from the N-terminus, the 320-residue chain is o-succinylbenzoate synthase (320 aa).

Lys133 acts as the Proton donor in catalysis. 3 residues coordinate Mg(2+): Asp161, Glu190, and Asp213. The Proton acceptor role is filled by Lys235.

Belongs to the mandelate racemase/muconate lactonizing enzyme family. MenC type 1 subfamily. The cofactor is a divalent metal cation.

It catalyses the reaction (1R,6R)-6-hydroxy-2-succinyl-cyclohexa-2,4-diene-1-carboxylate = 2-succinylbenzoate + H2O. It functions in the pathway quinol/quinone metabolism; 1,4-dihydroxy-2-naphthoate biosynthesis; 1,4-dihydroxy-2-naphthoate from chorismate: step 4/7. Its pathway is quinol/quinone metabolism; menaquinone biosynthesis. Its function is as follows. Converts 2-succinyl-6-hydroxy-2,4-cyclohexadiene-1-carboxylate (SHCHC) to 2-succinylbenzoate (OSB). The polypeptide is o-succinylbenzoate synthase (Shigella boydii serotype 4 (strain Sb227)).